Reading from the N-terminus, the 287-residue chain is 4,4'-diapophytoene synthase (287 aa).

Residues 18 to 21 (HSKS), Tyr-41, and Arg-45 each bind (2E,6E)-farnesyl diphosphate. The Mg(2+) site is built by Asp-48 and Asp-52. Gln-165 is a (2E,6E)-farnesyl diphosphate binding site. Asn-168 is a binding site for Mg(2+). Arg-171 is a (2E,6E)-farnesyl diphosphate binding site. Position 172 (Asp-172) interacts with Mg(2+). Tyr-248 lines the (2E,6E)-farnesyl diphosphate pocket.

Belongs to the phytoene/squalene synthase family. CrtM subfamily. It depends on Mg(2+) as a cofactor.

The catalysed reaction is 2 (2E,6E)-farnesyl diphosphate = 15-cis-4,4'-diapophytoene + 2 diphosphate. It participates in carotenoid biosynthesis; staphyloxanthin biosynthesis; staphyloxanthin from farnesyl diphosphate: step 1/5. Involved in the biosynthesis of the yellow-orange carotenoid staphyloxanthin, which plays a role in the virulence via its protective function against oxidative stress. Catalyzes the head-to-head condensation of two molecules of farnesyl diphosphate (FPP) into the colorless C(30) carotenoid 4,4'-diapophytoene (dehydrosqualene). The protein is 4,4'-diapophytoene synthase (crtM) of Staphylococcus aureus (strain Mu50 / ATCC 700699).